Consider the following 383-residue polypeptide: Erythronate-4-phosphate dehydrogenase (383 aa).

Serine 45 and threonine 67 together coordinate substrate. Aspartate 147 serves as a coordination point for NAD(+). The active site involves arginine 208. NAD(+) is bound at residue aspartate 232. Glutamate 237 is a catalytic residue. Histidine 254 acts as the Proton donor in catalysis. Position 257 (glycine 257) interacts with NAD(+). Tyrosine 258 lines the substrate pocket.

The protein belongs to the D-isomer specific 2-hydroxyacid dehydrogenase family. PdxB subfamily. Homodimer.

Its subcellular location is the cytoplasm. The catalysed reaction is 4-phospho-D-erythronate + NAD(+) = (R)-3-hydroxy-2-oxo-4-phosphooxybutanoate + NADH + H(+). The protein operates within cofactor biosynthesis; pyridoxine 5'-phosphate biosynthesis; pyridoxine 5'-phosphate from D-erythrose 4-phosphate: step 2/5. Functionally, catalyzes the oxidation of erythronate-4-phosphate to 3-hydroxy-2-oxo-4-phosphonooxybutanoate. The protein is Erythronate-4-phosphate dehydrogenase of Psychromonas ingrahamii (strain DSM 17664 / CCUG 51855 / 37).